The sequence spans 265 residues: MSRAMALFFVLCWIQDEIVLQVFSKVPYDPSFDETRTAVRSITKRDTQKSYSQQKSLNNAAFASGSNEREEHLAKIFDEILLQVFPKFPYDPSFNEATAVRSITKTDMRKGTSIAWNSPKPEYFLGSVDKIPDKDHLSEEKNFKESCLFDRDLREQLTTIDKETLQGAAKPDAHFRTMPCGQLLHFLQRNTIIAAVSGVAILMAIVLLLLGLASYIRKKQPSSPLANTTYNIFIMDGKTWWHNSEEKNFTKLAKKQKQLKSSSCV.

The signal sequence occupies residues Met-1–Leu-20. Residues Ile-192–Leu-212 form a helical membrane-spanning segment.

It localises to the membrane. This is an uncharacterized protein from Homo sapiens (Human).